Here is a 223-residue protein sequence, read N- to C-terminus: UPF0173 metal-dependent hydrolase TV0864 (223 aa).

The protein belongs to the UPF0173 family.

This is UPF0173 metal-dependent hydrolase TV0864 from Thermoplasma volcanium (strain ATCC 51530 / DSM 4299 / JCM 9571 / NBRC 15438 / GSS1).